Reading from the N-terminus, the 480-residue chain is ATP synthase subunit beta, chloroplastic (480 aa).

161–168 (GGAGVGKT) is an ATP binding site.

It belongs to the ATPase alpha/beta chains family. F-type ATPases have 2 components, CF(1) - the catalytic core - and CF(0) - the membrane proton channel. CF(1) has five subunits: alpha(3), beta(3), gamma(1), delta(1), epsilon(1). CF(0) has four main subunits: a(1), b(1), b'(1) and c(9-12).

The protein localises to the plastid. It is found in the chloroplast thylakoid membrane. The catalysed reaction is ATP + H2O + 4 H(+)(in) = ADP + phosphate + 5 H(+)(out). Its function is as follows. Produces ATP from ADP in the presence of a proton gradient across the membrane. The catalytic sites are hosted primarily by the beta subunits. The chain is ATP synthase subunit beta, chloroplastic from Tetradesmus obliquus (Green alga).